The primary structure comprises 313 residues: Homoserine O-succinyltransferase (313 aa).

Residue Cys-142 is the Acyl-thioester intermediate of the active site. Residues Lys-163 and Ser-192 each contribute to the substrate site. His-235 acts as the Proton acceptor in catalysis. Residue Glu-237 is part of the active site. A substrate-binding site is contributed by Arg-249.

Belongs to the MetA family.

Its subcellular location is the cytoplasm. The catalysed reaction is L-homoserine + succinyl-CoA = O-succinyl-L-homoserine + CoA. It functions in the pathway amino-acid biosynthesis; L-methionine biosynthesis via de novo pathway; O-succinyl-L-homoserine from L-homoserine: step 1/1. Functionally, transfers a succinyl group from succinyl-CoA to L-homoserine, forming succinyl-L-homoserine. In Shewanella sp. (strain ANA-3), this protein is Homoserine O-succinyltransferase.